A 217-amino-acid chain; its full sequence is Cytochrome c biogenesis ATP-binding export protein CcmA (217 aa).

In terms of domain architecture, ABC transporter spans 6-215 (FSAKNLACVR…HLDQFAVAEE (210 aa)). 38-45 (GPNGSGKS) is a binding site for ATP.

Belongs to the ABC transporter superfamily. CcmA exporter (TC 3.A.1.107) family. In terms of assembly, the complex is composed of two ATP-binding proteins (CcmA) and two transmembrane proteins (CcmB).

It localises to the cell inner membrane. The enzyme catalyses heme b(in) + ATP + H2O = heme b(out) + ADP + phosphate + H(+). Its function is as follows. Part of the ABC transporter complex CcmAB involved in the biogenesis of c-type cytochromes; once thought to export heme, this seems not to be the case, but its exact role is uncertain. Responsible for energy coupling to the transport system. The chain is Cytochrome c biogenesis ATP-binding export protein CcmA from Paramagnetospirillum magneticum (strain ATCC 700264 / AMB-1) (Magnetospirillum magneticum).